Reading from the N-terminus, the 126-residue chain is UPF0538 protein C2orf76 homolog (126 aa).

Belongs to the UPF0538 family.

This is UPF0538 protein C2orf76 homolog from Danio rerio (Zebrafish).